The following is a 342-amino-acid chain: Alpha-tocopherol transfer protein-like (342 aa).

Residues 1 to 31 are disordered; sequence MSEESDSLRTSPSVASLSENELPPPPEPPGY. Residues 8 to 19 show a composition bias toward polar residues; the sequence is LRTSPSVASLSE. Positions 117-282 constitute a CRAL-TRIO domain; sequence KPSALKDVLA…EYGGTAGELD (166 aa).

Its function is as follows. May act as a protein that binds a hydrophobic ligand. The sequence is that of Alpha-tocopherol transfer protein-like (TTPAL) from Pongo abelii (Sumatran orangutan).